We begin with the raw amino-acid sequence, 128 residues long: Large ribosomal subunit protein bL21 (128 aa).

The interval 104 to 128 (GKKPSVGPRPKRVKAEPAPAADAAE) is disordered. The span at 119–128 (EPAPAADAAE) shows a compositional bias: low complexity.

This sequence belongs to the bacterial ribosomal protein bL21 family. Part of the 50S ribosomal subunit. Contacts protein L20.

This protein binds to 23S rRNA in the presence of protein L20. This Rhodopseudomonas palustris (strain BisB5) protein is Large ribosomal subunit protein bL21.